Consider the following 633-residue polypeptide: tRNA uridine 5-carboxymethylaminomethyl modification enzyme MnmG (633 aa).

FAD-binding positions include 15-20 (GAGHAG), Ile-127, and Ser-182. NAD(+) is bound at residue 276-290 (GPRYCPSIEDKIVRF). Gln-373 contributes to the FAD binding site.

Belongs to the MnmG family. In terms of assembly, homodimer. Heterotetramer of two MnmE and two MnmG subunits. It depends on FAD as a cofactor.

The protein resides in the cytoplasm. Functionally, NAD-binding protein involved in the addition of a carboxymethylaminomethyl (cmnm) group at the wobble position (U34) of certain tRNAs, forming tRNA-cmnm(5)s(2)U34. In Streptococcus agalactiae serotype Ia (strain ATCC 27591 / A909 / CDC SS700), this protein is tRNA uridine 5-carboxymethylaminomethyl modification enzyme MnmG.